The following is a 472-amino-acid chain: Homeobox protein PKNOX2 (472 aa).

The interval 1 to 62 (MMQHASPAPA…STPVPSAPID (62 aa)) is disordered. The span at 26-38 (DSPQMTATAQPPS) shows a compositional bias: polar residues. The span at 46–56 (SAPSAAASTPV) shows a compositional bias: low complexity. The MEIS N-terminal domain maps to 96–179 (GSECITSASF…MHSDNLLRND (84 aa)). The homeobox DNA-binding region spans 291 to 350 (KRGVLPKHATNIMRSWLFQHLMHPYPTEDEKRQIAAQTNLTLLQVNNWFINARRRILQPM). Disordered stretches follow at residues 351–371 (LDAS…QHRP), 386–405 (QQQG…LDNL), and 422–472 (MAAH…DSLE). Positions 361-371 (KAKKIKSQHRP) are enriched in basic residues. The segment covering 429 to 454 (LDGTEEEDEDEMEEEEEEELEEEVDE) has biased composition (acidic residues).

The protein belongs to the TALE/MEIS homeobox family.

It localises to the nucleus. This Homo sapiens (Human) protein is Homeobox protein PKNOX2 (PKNOX2).